A 312-amino-acid polypeptide reads, in one-letter code: MEEFQQIPDFYGCYLLQSISKRQSFYIGSTPNPVRRLRQHNGSLSRGGAYRTKRDGTRPWEMVAIVYGFPSRIAALQFEHAWQHGYQTRYIKSQDRVVKTRKGGRSIHHKLAMITSLLKNEYFRYMDLTLHFFNQKVEEIWKNDKFNVSQTQESIDNNYTVSLSQDALTEINNDTIDDIMDVNEKNMELVQNLYSTTLAEKTKTLLLYKEKIDTGINTCQFCNKIIKHNLSGNISENLFAFCRDTSCTFVSHLACAYRYFMSNTELPKEDTIIPQSPKCPKCYTLLKWCDVIYYSIKLNKDNTTADDKKKTI.

The 84-residue stretch at Asp9–Lys92 folds into the GIY-YIG domain. The SLX1-type zinc-finger motif lies at Cys219 to Cys282.

The protein belongs to the SLX1 family. As to quaternary structure, forms a heterodimer with SLX4. A divalent metal cation is required as a cofactor.

The protein localises to the nucleus. Its function is as follows. Catalytic subunit of the SLX1-SLX4 structure-specific endonuclease that resolves DNA secondary structures generated during DNA repair and recombination. Has endonuclease activity towards branched DNA substrates, introducing single-strand cuts in duplex DNA close to junctions with ss-DNA. This chain is Structure-specific endonuclease subunit SLX1, found in Candida glabrata (strain ATCC 2001 / BCRC 20586 / JCM 3761 / NBRC 0622 / NRRL Y-65 / CBS 138) (Yeast).